The following is a 701-amino-acid chain: DNA ligase (701 aa).

Residues 58 to 62 (DYEYD), 107 to 108 (SL), and Glu138 each bind NAD(+). Catalysis depends on Lys140, which acts as the N6-AMP-lysine intermediate. Arg161, Glu199, Lys323, and Lys347 together coordinate NAD(+). The Zn(2+) site is built by Cys441, Cys444, Cys459, and Cys464. The BRCT domain maps to 621–701 (EKRGKLAGLN…EEFLKMIGQQ (81 aa)).

The protein belongs to the NAD-dependent DNA ligase family. LigA subfamily. It depends on Mg(2+) as a cofactor. Mn(2+) is required as a cofactor.

The catalysed reaction is NAD(+) + (deoxyribonucleotide)n-3'-hydroxyl + 5'-phospho-(deoxyribonucleotide)m = (deoxyribonucleotide)n+m + AMP + beta-nicotinamide D-nucleotide.. Its function is as follows. DNA ligase that catalyzes the formation of phosphodiester linkages between 5'-phosphoryl and 3'-hydroxyl groups in double-stranded DNA using NAD as a coenzyme and as the energy source for the reaction. It is essential for DNA replication and repair of damaged DNA. The chain is DNA ligase from Sulfurihydrogenibium azorense (strain DSM 15241 / OCM 825 / Az-Fu1).